The chain runs to 223 residues: Lipoprotein-releasing system ATP-binding protein LolD (223 aa).

The 223-residue stretch at 1-223 (MAKVFRSGST…DEVEPQSLPA (223 aa)) folds into the ABC transporter domain. ATP is bound at residue 32–39 (GDSGSGKS).

This sequence belongs to the ABC transporter superfamily. Lipoprotein translocase (TC 3.A.1.125) family. In terms of assembly, the complex is composed of two ATP-binding proteins (LolD) and two transmembrane proteins (LolC and LolE).

Its subcellular location is the cell inner membrane. Its function is as follows. Part of the ABC transporter complex LolCDE involved in the translocation of mature outer membrane-directed lipoproteins, from the inner membrane to the periplasmic chaperone, LolA. Responsible for the formation of the LolA-lipoprotein complex in an ATP-dependent manner. This Koribacter versatilis (strain Ellin345) protein is Lipoprotein-releasing system ATP-binding protein LolD.